A 283-amino-acid polypeptide reads, in one-letter code: F-box only protein 27 (283 aa).

The disordered stretch occupies residues 1 to 23; it reads MGASVSRGRAARVPAPEPEPEEA. An F-box domain is found at 23–70; that stretch reads ALDLSQLPPELLLVVLSHVPPRTLLGRCRQVCRGWRALVDGQALWLLI. Residues 104–280 form the FBA domain; the sequence is FCARRPIGRN…VTNSSVIVRV (177 aa).

Part of a SCF (SKP1-cullin-F-box) protein ligase complex. Interacts with SKP1 and CUL1. As to expression, predominantly expressed in brain, heart and kidney. Expressed at lower levels in liver and lung.

Functionally, substrate-recognition component of the SCF (SKP1-CUL1-F-box protein)-type E3 ubiquitin ligase complex. Able to recognize and bind denatured glycoproteins, which are modified with complex-type oligosaccharides. This Homo sapiens (Human) protein is F-box only protein 27 (FBXO27).